The following is a 241-amino-acid chain: UDP-2,3-diacylglucosamine hydrolase (241 aa).

Asp-8, His-10, Asp-41, Asn-79, and His-114 together coordinate Mn(2+). 79–80 (NR) serves as a coordination point for substrate. 5 residues coordinate substrate: Asp-122, Ser-160, Asn-164, Lys-167, and His-195. Positions 195 and 197 each coordinate Mn(2+).

It belongs to the LpxH family. Requires Mn(2+) as cofactor.

It is found in the cell inner membrane. It catalyses the reaction UDP-2-N,3-O-bis[(3R)-3-hydroxytetradecanoyl]-alpha-D-glucosamine + H2O = 2-N,3-O-bis[(3R)-3-hydroxytetradecanoyl]-alpha-D-glucosaminyl 1-phosphate + UMP + 2 H(+). It participates in glycolipid biosynthesis; lipid IV(A) biosynthesis; lipid IV(A) from (3R)-3-hydroxytetradecanoyl-[acyl-carrier-protein] and UDP-N-acetyl-alpha-D-glucosamine: step 4/6. Its function is as follows. Hydrolyzes the pyrophosphate bond of UDP-2,3-diacylglucosamine to yield 2,3-diacylglucosamine 1-phosphate (lipid X) and UMP by catalyzing the attack of water at the alpha-P atom. Involved in the biosynthesis of lipid A, a phosphorylated glycolipid that anchors the lipopolysaccharide to the outer membrane of the cell. The chain is UDP-2,3-diacylglucosamine hydrolase from Aeromonas hydrophila subsp. hydrophila (strain ATCC 7966 / DSM 30187 / BCRC 13018 / CCUG 14551 / JCM 1027 / KCTC 2358 / NCIMB 9240 / NCTC 8049).